Consider the following 131-residue polypeptide: D-ribose pyranase (131 aa).

H20 functions as the Proton donor in the catalytic mechanism. Substrate-binding positions include D28, H98, and 120-122 (YAN).

It belongs to the RbsD / FucU family. RbsD subfamily. In terms of assembly, homodecamer.

The protein resides in the cytoplasm. The enzyme catalyses beta-D-ribopyranose = beta-D-ribofuranose. It functions in the pathway carbohydrate metabolism; D-ribose degradation; D-ribose 5-phosphate from beta-D-ribopyranose: step 1/2. In terms of biological role, catalyzes the interconversion of beta-pyran and beta-furan forms of D-ribose. The sequence is that of D-ribose pyranase from Bacillus cereus (strain 03BB102).